We begin with the raw amino-acid sequence, 98 residues long: Large ribosomal subunit protein uL23 (98 aa).

The protein belongs to the universal ribosomal protein uL23 family. As to quaternary structure, part of the 50S ribosomal subunit. Contacts protein L29, and trigger factor when it is bound to the ribosome.

One of the early assembly proteins it binds 23S rRNA. One of the proteins that surrounds the polypeptide exit tunnel on the outside of the ribosome. Forms the main docking site for trigger factor binding to the ribosome. This is Large ribosomal subunit protein uL23 from Saccharophagus degradans (strain 2-40 / ATCC 43961 / DSM 17024).